Consider the following 227-residue polypeptide: Phosphoglycolate phosphatase (227 aa).

The active-site Nucleophile is the D14. Mg(2+) contacts are provided by D14, D16, and D177.

The protein belongs to the HAD-like hydrolase superfamily. CbbY/CbbZ/Gph/YieH family. The cofactor is Mg(2+).

It carries out the reaction 2-phosphoglycolate + H2O = glycolate + phosphate. It participates in organic acid metabolism; glycolate biosynthesis; glycolate from 2-phosphoglycolate: step 1/1. Functionally, specifically catalyzes the dephosphorylation of 2-phosphoglycolate. Is involved in the dissimilation of the intracellular 2-phosphoglycolate formed during the DNA repair of 3'-phosphoglycolate ends, a major class of DNA lesions induced by oxidative stress. This Thiobacillus denitrificans (strain ATCC 25259 / T1) protein is Phosphoglycolate phosphatase.